We begin with the raw amino-acid sequence, 178 residues long: Large ribosomal subunit protein bL17 (178 aa).

A compositionally biased stretch (basic and acidic residues) spans Asp126 to Glu139. The tract at residues Asp126–Ala178 is disordered. Positions Gln140 to Ala163 are enriched in low complexity. Positions Ala164–Ala178 are enriched in basic and acidic residues.

Belongs to the bacterial ribosomal protein bL17 family. As to quaternary structure, part of the 50S ribosomal subunit. Contacts protein L32.

This chain is Large ribosomal subunit protein bL17, found in Nocardia farcinica (strain IFM 10152).